The primary structure comprises 489 residues: Homoserine O-acetyltransferase (489 aa).

An AB hydrolase-1 domain is found at 69–438 (LLLCHALSGS…AEGHDGFLLE (370 aa)). Catalysis depends on Ser163, which acts as the Nucleophile. The interval 255-329 (ASRHPYPDRL…QTTDSSSLNQ (75 aa)) is disordered. Positions 280 to 290 (EGNRNRRERPC) are enriched in basic and acidic residues. Over residues 299 to 329 (SESALNSPASSVSSLPSLGASQTTDSSSLNQ) the composition is skewed to low complexity. Active-site residues include Asp403 and His432.

It belongs to the AB hydrolase superfamily. MetX family.

Its subcellular location is the cytoplasm. It carries out the reaction L-homoserine + acetyl-CoA = O-acetyl-L-homoserine + CoA. It functions in the pathway amino-acid biosynthesis; L-methionine biosynthesis via de novo pathway; O-acetyl-L-homoserine from L-homoserine: step 1/1. Functionally, commits homoserine to the methionine biosynthesis pathway by catalyzing its O-acetylation. This is Homoserine O-acetyltransferase (met6) from Schizosaccharomyces pombe (strain 972 / ATCC 24843) (Fission yeast).